The chain runs to 207 residues: Guanylate kinase (207 aa).

In terms of domain architecture, Guanylate kinase-like spans Gly-6–Glu-185. Gly-13–Gly-20 provides a ligand contact to ATP.

It belongs to the guanylate kinase family.

The protein resides in the cytoplasm. The catalysed reaction is GMP + ATP = GDP + ADP. Its function is as follows. Essential for recycling GMP and indirectly, cGMP. This is Guanylate kinase from Staphylococcus aureus (strain bovine RF122 / ET3-1).